We begin with the raw amino-acid sequence, 660 residues long: DNA mismatch repair protein MutL (660 aa).

Belongs to the DNA mismatch repair MutL/HexB family.

Its function is as follows. This protein is involved in the repair of mismatches in DNA. It is required for dam-dependent methyl-directed DNA mismatch repair. May act as a 'molecular matchmaker', a protein that promotes the formation of a stable complex between two or more DNA-binding proteins in an ATP-dependent manner without itself being part of a final effector complex. In Streptococcus equi subsp. zooepidemicus (strain MGCS10565), this protein is DNA mismatch repair protein MutL.